The sequence spans 174 residues: uncharacterized protein (174 aa).

The protein belongs to the mimivirus L39/R874 family.

This is an uncharacterized protein from Acanthamoeba polyphaga (Amoeba).